The chain runs to 84 residues: Cell division topological specificity factor (84 aa).

The protein belongs to the MinE family.

Functionally, prevents the cell division inhibition by proteins MinC and MinD at internal division sites while permitting inhibition at polar sites. This ensures cell division at the proper site by restricting the formation of a division septum at the midpoint of the long axis of the cell. The protein is Cell division topological specificity factor of Ectopseudomonas mendocina (strain ymp) (Pseudomonas mendocina).